We begin with the raw amino-acid sequence, 140 residues long: Nucleoside diphosphate kinase (140 aa).

Lys-11, Phe-59, Arg-87, Thr-93, Arg-104, and Asn-114 together coordinate ATP. His-117 serves as the catalytic Pros-phosphohistidine intermediate.

It belongs to the NDK family. In terms of assembly, homotetramer. The cofactor is Mg(2+).

Its subcellular location is the cytoplasm. The enzyme catalyses a 2'-deoxyribonucleoside 5'-diphosphate + ATP = a 2'-deoxyribonucleoside 5'-triphosphate + ADP. The catalysed reaction is a ribonucleoside 5'-diphosphate + ATP = a ribonucleoside 5'-triphosphate + ADP. In terms of biological role, major role in the synthesis of nucleoside triphosphates other than ATP. The ATP gamma phosphate is transferred to the NDP beta phosphate via a ping-pong mechanism, using a phosphorylated active-site intermediate. The chain is Nucleoside diphosphate kinase from Brucella canis (strain ATCC 23365 / NCTC 10854 / RM-666).